The primary structure comprises 297 residues: Phosphatidylserine decarboxylase proenzyme (297 aa).

Catalysis depends on charge relay system; for autoendoproteolytic cleavage activity residues Asp100, His157, and Ser263. Ser263 serves as the catalytic Schiff-base intermediate with substrate; via pyruvic acid; for decarboxylase activity. Pyruvic acid (Ser); by autocatalysis is present on Ser263.

Belongs to the phosphatidylserine decarboxylase family. PSD-B subfamily. Prokaryotic type I sub-subfamily. As to quaternary structure, heterodimer of a large membrane-associated beta subunit and a small pyruvoyl-containing alpha subunit. Requires pyruvate as cofactor. Post-translationally, is synthesized initially as an inactive proenzyme. Formation of the active enzyme involves a self-maturation process in which the active site pyruvoyl group is generated from an internal serine residue via an autocatalytic post-translational modification. Two non-identical subunits are generated from the proenzyme in this reaction, and the pyruvate is formed at the N-terminus of the alpha chain, which is derived from the carboxyl end of the proenzyme. The autoendoproteolytic cleavage occurs by a canonical serine protease mechanism, in which the side chain hydroxyl group of the serine supplies its oxygen atom to form the C-terminus of the beta chain, while the remainder of the serine residue undergoes an oxidative deamination to produce ammonia and the pyruvoyl prosthetic group on the alpha chain. During this reaction, the Ser that is part of the protease active site of the proenzyme becomes the pyruvoyl prosthetic group, which constitutes an essential element of the active site of the mature decarboxylase.

The protein localises to the cell membrane. It catalyses the reaction a 1,2-diacyl-sn-glycero-3-phospho-L-serine + H(+) = a 1,2-diacyl-sn-glycero-3-phosphoethanolamine + CO2. It functions in the pathway phospholipid metabolism; phosphatidylethanolamine biosynthesis; phosphatidylethanolamine from CDP-diacylglycerol: step 2/2. In terms of biological role, catalyzes the formation of phosphatidylethanolamine (PtdEtn) from phosphatidylserine (PtdSer). The chain is Phosphatidylserine decarboxylase proenzyme from Haemophilus ducreyi (strain 35000HP / ATCC 700724).